The primary structure comprises 102 residues: Cell division topological specificity factor (102 aa).

Belongs to the MinE family.

Functionally, prevents the cell division inhibition by proteins MinC and MinD at internal division sites while permitting inhibition at polar sites. This ensures cell division at the proper site by restricting the formation of a division septum at the midpoint of the long axis of the cell. The chain is Cell division topological specificity factor from Synechococcus sp. (strain CC9605).